A 152-amino-acid chain; its full sequence is Large ribosomal subunit protein uL30 (152 aa).

It belongs to the universal ribosomal protein uL30 family. In terms of assembly, part of the 50S ribosomal subunit.

The protein is Large ribosomal subunit protein uL30 of Methanobrevibacter smithii (strain ATCC 35061 / DSM 861 / OCM 144 / PS).